Consider the following 246-residue polypeptide: Biosynthetic peptidoglycan transglycosylase (246 aa).

Residues 20–42 (WLRWLMAAPLLFAAASVLQVLIL) form a helical membrane-spanning segment.

The protein belongs to the glycosyltransferase 51 family.

It is found in the cell inner membrane. The catalysed reaction is [GlcNAc-(1-&gt;4)-Mur2Ac(oyl-L-Ala-gamma-D-Glu-L-Lys-D-Ala-D-Ala)](n)-di-trans,octa-cis-undecaprenyl diphosphate + beta-D-GlcNAc-(1-&gt;4)-Mur2Ac(oyl-L-Ala-gamma-D-Glu-L-Lys-D-Ala-D-Ala)-di-trans,octa-cis-undecaprenyl diphosphate = [GlcNAc-(1-&gt;4)-Mur2Ac(oyl-L-Ala-gamma-D-Glu-L-Lys-D-Ala-D-Ala)](n+1)-di-trans,octa-cis-undecaprenyl diphosphate + di-trans,octa-cis-undecaprenyl diphosphate + H(+). It functions in the pathway cell wall biogenesis; peptidoglycan biosynthesis. Peptidoglycan polymerase that catalyzes glycan chain elongation from lipid-linked precursors. This Xanthomonas axonopodis pv. citri (strain 306) protein is Biosynthetic peptidoglycan transglycosylase.